Reading from the N-terminus, the 388-residue chain is MHDYQLFTSESVSEGHPDKMADQISDALLDAIMREDLHARVACETLVKTGAVVLAGEISTTANIDIERIVRDTVNSIGYNHSDLGFDGETCAVINMIGKQSPEIAQGVDRMNPEDQGAGDQGLMFGYASNETEVLMPAPIEFAHRLMERQSELRRSGELKWLRPDAKAQVTLKYTNGTPSAIDAVVLSTQHDPDISQADLQEAVMENIIKHVLPADLLHAGTRYHINPTGKFVIGGPVGDAGITGRKIIVDTYGGMARHGGGAFSGKDPSKVDRSAAYAGRYVAKNIVAAGLAERCEVQISYAIGVAEPTSISVNTFGTAKVSAEVIIELIRTHFDLRPYGITHMLNLLQPMYQQTATYGHFGRPGSETAFTWEKTDKAEILRADANI.

His-16 contributes to the ATP binding site. Asp-18 lines the Mg(2+) pocket. Glu-44 provides a ligand contact to K(+). Positions 57 and 100 each coordinate L-methionine. Positions 100 to 110 (QSPEIAQGVDR) are flexible loop. ATP is bound by residues 165–167 (DAK), 231–232 (KF), Asp-240, 246–247 (RK), Ala-263, and Lys-267. Asp-240 contacts L-methionine. L-methionine is bound at residue Lys-271.

Belongs to the AdoMet synthase family. As to quaternary structure, homotetramer; dimer of dimers. Requires Mg(2+) as cofactor. The cofactor is K(+).

Its subcellular location is the cytoplasm. It carries out the reaction L-methionine + ATP + H2O = S-adenosyl-L-methionine + phosphate + diphosphate. It functions in the pathway amino-acid biosynthesis; S-adenosyl-L-methionine biosynthesis; S-adenosyl-L-methionine from L-methionine: step 1/1. Catalyzes the formation of S-adenosylmethionine (AdoMet) from methionine and ATP. The overall synthetic reaction is composed of two sequential steps, AdoMet formation and the subsequent tripolyphosphate hydrolysis which occurs prior to release of AdoMet from the enzyme. This chain is S-adenosylmethionine synthase, found in Psychrobacter sp. (strain PRwf-1).